We begin with the raw amino-acid sequence, 263 residues long: Purine nucleoside phosphorylase SAV1187 (263 aa).

Residues His-79, Cys-124, and His-141 each coordinate Zn(2+).

The protein belongs to the purine nucleoside phosphorylase YfiH/LACC1 family. Homodimer. Cu(2+) is required as a cofactor. The cofactor is Zn(2+).

The enzyme catalyses adenosine + phosphate = alpha-D-ribose 1-phosphate + adenine. The catalysed reaction is S-methyl-5'-thioadenosine + phosphate = 5-(methylsulfanyl)-alpha-D-ribose 1-phosphate + adenine. It catalyses the reaction inosine + phosphate = alpha-D-ribose 1-phosphate + hypoxanthine. It carries out the reaction adenosine + H2O + H(+) = inosine + NH4(+). Purine nucleoside enzyme that catalyzes the phosphorolysis of adenosine and inosine nucleosides, yielding D-ribose 1-phosphate and the respective free bases, adenine and hypoxanthine. Also catalyzes the phosphorolysis of S-methyl-5'-thioadenosine into adenine and S-methyl-5-thio-alpha-D-ribose 1-phosphate. Also has adenosine deaminase activity. The protein is Purine nucleoside phosphorylase SAV1187 of Staphylococcus aureus (strain Mu50 / ATCC 700699).